The sequence spans 422 residues: F-box protein At3g12350 (422 aa).

The F-box domain occupies 5–52 (ALPFCEIPEDLQLRILSLLTPAEISSFACTSKRFASLCQEDGKIWHVM). 2 stretches are compositionally biased toward basic and acidic residues: residues 197–207 (NNRREDQRSSG) and 242–252 (KEKERQASRTK). 2 disordered regions span residues 197–216 (NNRR…LISS) and 226–252 (LANK…SRTK).

The chain is F-box protein At3g12350 from Arabidopsis thaliana (Mouse-ear cress).